We begin with the raw amino-acid sequence, 114 residues long: uncharacterized protein (114 aa).

3 residues coordinate Fe cation: Cys40, Cys106, and Cys108.

Belongs to the HesB/IscA family. Ycf83 subfamily.

Its subcellular location is the plastid. The protein localises to the chloroplast. This is an uncharacterized protein from Pyropia yezoensis (Susabi-nori).